A 447-amino-acid chain; its full sequence is Tol-Pal system protein TolB (447 aa).

An N-terminal signal peptide occupies residues 1 to 34 (MSSRLPALPLSRRQALLGGAGSAAALLLPGGAQA). The interval 426 to 447 (RNEQKVPTPGFASDPAWSPLLS) is disordered.

The protein belongs to the TolB family. As to quaternary structure, the Tol-Pal system is composed of five core proteins: the inner membrane proteins TolA, TolQ and TolR, the periplasmic protein TolB and the outer membrane protein Pal. They form a network linking the inner and outer membranes and the peptidoglycan layer.

The protein resides in the periplasm. Part of the Tol-Pal system, which plays a role in outer membrane invagination during cell division and is important for maintaining outer membrane integrity. This is Tol-Pal system protein TolB from Rhodopseudomonas palustris (strain BisB18).